The primary structure comprises 312 residues: tRNA-dihydrouridine(16) synthase (312 aa).

FMN is bound by residues 7-9 and Gln-68; that span reads PMQ. Cys-98 functions as the Proton donor in the catalytic mechanism. Residues Lys-139, 200–202, and 224–225 each bind FMN; these read NGE and GR.

It belongs to the Dus family. DusC subfamily. The cofactor is FMN.

The enzyme catalyses 5,6-dihydrouridine(16) in tRNA + NADP(+) = uridine(16) in tRNA + NADPH + H(+). It catalyses the reaction 5,6-dihydrouridine(16) in tRNA + NAD(+) = uridine(16) in tRNA + NADH + H(+). Its function is as follows. Catalyzes the synthesis of 5,6-dihydrouridine (D), a modified base found in the D-loop of most tRNAs, via the reduction of the C5-C6 double bond in target uridines. Specifically modifies U16 in tRNAs. This is tRNA-dihydrouridine(16) synthase from Pasteurella multocida (strain Pm70).